Reading from the N-terminus, the 361-residue chain is Homer protein homolog 3 (361 aa).

The required for interaction with NFATC2 stretch occupies residues 1 to 80 (MSTAREQPIF…TKTSQKFGQW (80 aa)). The 113-residue stretch at 1 to 113 (MSTAREQPIF…EKFQEVKEAA (113 aa)) folds into the WH1 domain. Residues 114 to 169 (RLAREKSQDGGELTSPALGLASHQVPPSPLVSANGPGEEKLFRSQSADAPGPTERE) are disordered. Phosphoserine is present on residues Ser120 and Ser159. Coiled coils occupy residues 191–243 (ALQD…SEVT) and 254–358 (GQSL…RLAE).

The protein belongs to the Homer family. As to quaternary structure, tetramer. Isoform 1 and isoform 2 encode coiled-coil structures that mediate homo- and heteromultimerization. Interacts with NFATC2; interaction is calcium independent; interaction competes with PPP3CA for NFATC2 binding; interaction is reduced by AKT activation. Interacts with NFATC1 and NFATC4. Interacts with SHANK1; forms a high-order complex at least composed of SHANK1 and HOMER3; the complex formation is regulated by CAMK2A-mediated phosphorylation.

It is found in the cytoplasm. Its subcellular location is the postsynaptic density. It localises to the synapse. In terms of biological role, postsynaptic density scaffolding protein. Binds and cross-links cytoplasmic regions of GRM1, GRM5, ITPR1, DNM3, RYR1, RYR2, SHANK1 and SHANK3. By physically linking GRM1 and GRM5 with ER-associated ITPR1 receptors, it aids the coupling of surface receptors to intracellular calcium release. Isoforms can be differently regulated and may play an important role in maintaining the plasticity at glutamatergic synapses. Negatively regulates T cell activation by inhibiting the calcineurin-NFAT pathway. Acts by competing with calcineurin/PPP3CA for NFAT protein binding, hence preventing NFAT activation by PPP3CA. The protein is Homer protein homolog 3 of Homo sapiens (Human).